The primary structure comprises 359 residues: Phosphate acyltransferase (359 aa).

Residues 337–359 form a disordered region; it reads AAGAAQPAPETEVPGAHPSPHVA.

Belongs to the PlsX family. As to quaternary structure, homodimer. Probably interacts with PlsY.

It is found in the cytoplasm. It catalyses the reaction a fatty acyl-[ACP] + phosphate = an acyl phosphate + holo-[ACP]. It functions in the pathway lipid metabolism; phospholipid metabolism. In terms of biological role, catalyzes the reversible formation of acyl-phosphate (acyl-PO(4)) from acyl-[acyl-carrier-protein] (acyl-ACP). This enzyme utilizes acyl-ACP as fatty acyl donor, but not acyl-CoA. The sequence is that of Phosphate acyltransferase from Cupriavidus necator (strain ATCC 17699 / DSM 428 / KCTC 22496 / NCIMB 10442 / H16 / Stanier 337) (Ralstonia eutropha).